A 344-amino-acid chain; its full sequence is S-adenosylmethionine:tRNA ribosyltransferase-isomerase (344 aa).

It belongs to the QueA family. In terms of assembly, monomer.

Its subcellular location is the cytoplasm. It carries out the reaction 7-aminomethyl-7-carbaguanosine(34) in tRNA + S-adenosyl-L-methionine = epoxyqueuosine(34) in tRNA + adenine + L-methionine + 2 H(+). The protein operates within tRNA modification; tRNA-queuosine biosynthesis. Its function is as follows. Transfers and isomerizes the ribose moiety from AdoMet to the 7-aminomethyl group of 7-deazaguanine (preQ1-tRNA) to give epoxyqueuosine (oQ-tRNA). The sequence is that of S-adenosylmethionine:tRNA ribosyltransferase-isomerase from Heliobacterium modesticaldum (strain ATCC 51547 / Ice1).